A 239-amino-acid chain; its full sequence is Lactate utilization protein A (239 aa).

Belongs to the LutA/YkgE family.

Functionally, is involved in L-lactate degradation and allows cells to grow with lactate as the sole carbon source. This is Lactate utilization protein A from Shouchella clausii (strain KSM-K16) (Alkalihalobacillus clausii).